We begin with the raw amino-acid sequence, 324 residues long: Probable UDP-sugar transporter protein SLC35A4 (324 aa).

At 1–18 (MSVEDGGMPGLSRPRQAR) the chain is on the cytoplasmic side. Residues 19–39 (WTLMLLLSTAMYGAHAPLLAL) traverse the membrane as a helical segment. The Lumenal segment spans residues 40-52 (CHVDGRVPFRPSS). A helical transmembrane segment spans residues 53–73 (AVLLTELTKLLLCAFSLLVGW). Residues 74 to 85 (QAWPQGAPPWRQ) lie on the Cytoplasmic side of the membrane. The helical transmembrane segment at 86–106 (AAPFALSALLYGANNNLVIYL) threads the bilayer. Residues 107–142 (QRYMDPSTYQVLSNLKIGSTAVLYCLCLRHRLSVRQ) are Lumenal-facing. A helical membrane pass occupies residues 143–163 (GLALLLLMAAGACYAAGGLQV). The Cytoplasmic portion of the chain corresponds to 164-180 (PGNTLPRPPPAAAASPM). A helical membrane pass occupies residues 181 to 201 (PLHITPLGLLLLILYCLISGL). Over 202 to 214 (SSVYTELLMKRQQ) the chain is Lumenal. The chain crosses the membrane as a helical span at residues 215–235 (LPLALQNLFLYTFGVLLNLGL). Residues 236–250 (HAGGGPGPGLLEGFS) lie on the Cytoplasmic side of the membrane. Residues 251–271 (GWAALVVLSQALNGLLMSVVM) form a helical membrane-spanning segment. At 272–275 (KHGS) the chain is on the lumenal side. The helical transmembrane segment at 276–298 (SITRLFVVSCSLVVNAVLSAVLL) threads the bilayer. The Cytoplasmic portion of the chain corresponds to 299-324 (RLQLTAAFFLATLLIGLAMRLYYGSR).

Belongs to the nucleotide-sugar transporter family. SLC35A subfamily. Found in a complex with SLC35A2 and SLC35A3.

It localises to the golgi apparatus membrane. It catalyses the reaction CDP-L-ribitol(in) + CDP(out) = CDP-L-ribitol(out) + CDP(in). Its function is as follows. Mediates the transport of CDP-ribitol. Does not exhibit CMP-sialic acid, UDP-galactose and UDP-N-acetylglucosamine transport activity. In Pongo abelii (Sumatran orangutan), this protein is Probable UDP-sugar transporter protein SLC35A4.